The primary structure comprises 749 residues: Fibronectin type III and SPRY domain-containing protein 2 (749 aa).

The stretch at 205–317 (LNEALESAKD…TIEEMCHEEK (113 aa)) forms a coiled coil. Fibronectin type-III domains are found at residues 375 to 470 (PVIN…TAPS) and 471 to 564 (PPII…TIGS). The region spanning 546–744 (NMGGPSVRSE…KVHNGISMPK (199 aa)) is the B30.2/SPRY domain.

Interacts with CMYA5. In cardiac muscles, identified in a complex composed of FSD2, CMYA5 and RYR2.

It localises to the nucleus. The protein resides in the sarcoplasmic reticulum. The protein localises to the cytoplasm. It is found in the perinuclear region. The protein is Fibronectin type III and SPRY domain-containing protein 2 (FSD2) of Homo sapiens (Human).